We begin with the raw amino-acid sequence, 317 residues long: Terpene synthase 3 (317 aa).

A DDxx(x)D/E motif motif is present at residues 96–101; that stretch reads DDFYFE. An NDxxSxxxD/E motif motif is present at residues 223-231; the sequence is NDMVSFERE.

This sequence belongs to the terpene synthase family.

Functionally, terpene synthase that converts its substrate farnesyl diphosphate (FPP) into the sesquiterpene CAS 137235-51-9 as a major product. Is also able to convert FPP into 9-epi-(E)-caryophyllene, alpha-neoclovene, beta-neoclovene, and 3 yet unidentified sesquiterpenes. The chain is Terpene synthase 3 from Dictyostelium purpureum (Slime mold).